The following is a 481-amino-acid chain: Probable ATP-dependent RNA helicase ddx6 (481 aa).

The disordered stretch occupies residues Met-1–Lys-72. A compositionally biased stretch (polar residues) spans Ile-41–Asn-51. Residues Ser-52–Ser-63 show a composition bias toward low complexity. Positions Asn-95–Glu-123 match the Q motif motif. In terms of domain architecture, Helicase ATP-binding spans Ile-126–Ile-297. Ala-139 to Ser-146 contributes to the ATP binding site. A DEAD box motif is present at residues Asp-245–Asp-248. The Helicase C-terminal domain maps to Gly-307–Leu-467.

The protein belongs to the DEAD box helicase family. DDX6/DHH1 subfamily. Component of a ribonucleoprotein (RNP) complex, composed at least of cpeb1, lsm14b/rap55b, ddx6/Xp54, ybx2/frgy2, pat1/P100, eif4enif1/4E-T and eif4e1b. Component of a ribonucleoprotein (RNP) complex, composed at least of elavl1/elrA and/or elavl2/elrB, igf2bp3/vg1RBP, ddx6/Xp54, ybx2/frgy2, lsm14b/rap55b and, in a subset of RNP complexes, stau1/staufen. Component of a ribonucleoprotein (RNP) complex, composed at least of lsm14a/rap55a, ybx2/frgy2, ddx6/Xp54 and eif4enif1/4E-T. Interacts with lsm14a/rap55a.

The protein localises to the cytoplasm. It is found in the P-body. Its subcellular location is the nucleus. The enzyme catalyses ATP + H2O = ADP + phosphate + H(+). In terms of biological role, ATP-dependent RNA helicase that is an integral component of messenger ribonucleoprotein complexes (mRNPs), storage particles that mask maternal mRNAs from the translational apparatus during oocyte maturation. The chain is Probable ATP-dependent RNA helicase ddx6 (ddx6) from Xenopus tropicalis (Western clawed frog).